Consider the following 356-residue polypeptide: Protein RecA (356 aa).

Position 71–78 (glycine 71–threonine 78) interacts with ATP.

This sequence belongs to the RecA family.

It is found in the cytoplasm. Functionally, can catalyze the hydrolysis of ATP in the presence of single-stranded DNA, the ATP-dependent uptake of single-stranded DNA by duplex DNA, and the ATP-dependent hybridization of homologous single-stranded DNAs. It interacts with LexA causing its activation and leading to its autocatalytic cleavage. This Synechococcus elongatus (strain ATCC 33912 / PCC 7942 / FACHB-805) (Anacystis nidulans R2) protein is Protein RecA.